Reading from the N-terminus, the 128-residue chain is Ribonuclease P protein component (128 aa).

It belongs to the RnpA family. As to quaternary structure, consists of a catalytic RNA component (M1 or rnpB) and a protein subunit.

The enzyme catalyses Endonucleolytic cleavage of RNA, removing 5'-extranucleotides from tRNA precursor.. RNaseP catalyzes the removal of the 5'-leader sequence from pre-tRNA to produce the mature 5'-terminus. It can also cleave other RNA substrates such as 4.5S RNA. The protein component plays an auxiliary but essential role in vivo by binding to the 5'-leader sequence and broadening the substrate specificity of the ribozyme. The chain is Ribonuclease P protein component from Mycoplasma genitalium (strain ATCC 33530 / DSM 19775 / NCTC 10195 / G37) (Mycoplasmoides genitalium).